Reading from the N-terminus, the 336-residue chain is Fimbrial adhesin PapGII (336 aa).

Positions 1 to 20 (MKKWFPALLFSLCVSGESSA) are cleaved as a signal peptide. 2 disulfides stabilise this stretch: cysteine 64–cysteine 138 and cysteine 217–cysteine 249. D-galactose is bound by residues glutamate 79 and 124–127 (GYKW).

Belongs to the adhesin PapG family.

Its subcellular location is the secreted. The protein localises to the fimbrium. In terms of biological role, tip adhesin component of type P pili that plays a critical role in kidney infection through targeted interaction with the globoseries glycolipids containing the Gal-alpha(1-4)-Gal disaccharide present on uroepithelial cells. In turn, transcriptionally regulates host gene expression in kidney cells, leading to inflammatory pathway activation and renal tissue damage. Acts thereby as key determinant of invasive uropathogenic E.coli (UPEC), which cause pyelonephritis and urinary-source bacteremia. The sequence is that of Fimbrial adhesin PapGII from Escherichia coli O6:H1 (strain CFT073 / ATCC 700928 / UPEC).